A 687-amino-acid polypeptide reads, in one-letter code: Mu-like prophage FluMu transposase A (687 aa).

The 67-residue stretch at 8-74 (THYSVYELAN…ELLLKTTPEQ (67 aa)) folds into the HTH Mu-type domain. Residues 398-417 (PIERAFSHGGLGDYVDKHLL) constitute a DNA-binding region (H-T-H motif).

Its function is as follows. This transposase is essential for integration, replication-transposition, and excision of Mu-like viral DNA. The polypeptide is Mu-like prophage FluMu transposase A (Haemophilus influenzae (strain ATCC 51907 / DSM 11121 / KW20 / Rd)).